Here is a 133-residue protein sequence, read N- to C-terminus: Holo-[acyl-carrier-protein] synthase (133 aa).

Positions 8 and 56 each coordinate Mg(2+).

This sequence belongs to the P-Pant transferase superfamily. AcpS family. Requires Mg(2+) as cofactor.

It localises to the cytoplasm. The catalysed reaction is apo-[ACP] + CoA = holo-[ACP] + adenosine 3',5'-bisphosphate + H(+). Its function is as follows. Transfers the 4'-phosphopantetheine moiety from coenzyme A to a Ser of acyl-carrier-protein. The protein is Holo-[acyl-carrier-protein] synthase of Clostridium perfringens (strain ATCC 13124 / DSM 756 / JCM 1290 / NCIMB 6125 / NCTC 8237 / Type A).